Consider the following 231-residue polypeptide: Aspartate/glutamate leucyltransferase (231 aa).

Belongs to the R-transferase family. Bpt subfamily.

The protein resides in the cytoplasm. It carries out the reaction N-terminal L-glutamyl-[protein] + L-leucyl-tRNA(Leu) = N-terminal L-leucyl-L-glutamyl-[protein] + tRNA(Leu) + H(+). It catalyses the reaction N-terminal L-aspartyl-[protein] + L-leucyl-tRNA(Leu) = N-terminal L-leucyl-L-aspartyl-[protein] + tRNA(Leu) + H(+). In terms of biological role, functions in the N-end rule pathway of protein degradation where it conjugates Leu from its aminoacyl-tRNA to the N-termini of proteins containing an N-terminal aspartate or glutamate. The protein is Aspartate/glutamate leucyltransferase of Pseudoalteromonas atlantica (strain T6c / ATCC BAA-1087).